Consider the following 477-residue polypeptide: Argininosuccinate lyase (477 aa).

Belongs to the lyase 1 family. Argininosuccinate lyase subfamily.

It localises to the cytoplasm. The catalysed reaction is 2-(N(omega)-L-arginino)succinate = fumarate + L-arginine. It participates in amino-acid biosynthesis; L-arginine biosynthesis; L-arginine from L-ornithine and carbamoyl phosphate: step 3/3. In Corynebacterium diphtheriae (strain ATCC 700971 / NCTC 13129 / Biotype gravis), this protein is Argininosuccinate lyase.